The primary structure comprises 153 residues: HSSWYNRLFSNSGTICYVGLVWVLALGAILPNLFVGSLRCDPRIFSCTFAQYVSSYYTIAVVIFHFFLPIGVVSYCYLRIWVLVLNIRHRVKPDRHLHHQTWPYNIHGFITMFVVFVLFAVCWGPLNIIGLTVAIYPPLGDSIPQWLFVASYF.

The Cytoplasmic portion of the chain corresponds to 1–12 (HSSWYNRLFSNS). The helical transmembrane segment at 13-33 (GTICYVGLVWVLALGAILPNL) threads the bilayer. Residues 34–57 (FVGSLRCDPRIFSCTFAQYVSSYY) lie on the Extracellular side of the membrane. The chain crosses the membrane as a helical span at residues 58–78 (TIAVVIFHFFLPIGVVSYCYL). The Cytoplasmic portion of the chain corresponds to 79–112 (RIWVLVLNIRHRVKPDRHLHHQTWPYNIHGFITM). Residues 113-133 (FVVFVLFAVCWGPLNIIGLTV) form a helical membrane-spanning segment. Residues 134–145 (AIYPPLGDSIPQ) are Extracellular-facing. The chain crosses the membrane as a helical span at residues 146 to 153 (WLFVASYF).

The protein belongs to the G-protein coupled receptor 1 family.

The protein resides in the cell membrane. High affinity receptor for melatonin. The activity of this receptor is mediated by pertussis toxin sensitive G proteins that inhibits adenylate cyclase activity. In Xenopus laevis (African clawed frog), this protein is Melatonin receptor type 1A X2.0.